Consider the following 231-residue polypeptide: Quercetin 2,3-dioxygenase (231 aa).

His-57, His-59, His-101, and Glu-103 together coordinate a divalent metal cation.

This sequence belongs to the pirin family. Zn(2+) serves as cofactor. Requires Co(2+) as cofactor. It depends on Fe(2+) as a cofactor.

The enzyme catalyses quercetin + O2 = 2-(3,4-dihydroxybenzoyloxy)-4,6-dihydroxybenzoate + CO. It participates in flavonoid metabolism; quercetin degradation. Inhibited by kojic acid, sodium diethyldithiocarbamate and 1,10-phenanthroline monohydrochloride. Functionally, has quercetin 2,3-dioxygenase activity in vitro. Its physiological role is unknown; however, may provide a mechanism that would avoid inhibition of key cellular proteins, such as DNA gyrase, by quercetin. The polypeptide is Quercetin 2,3-dioxygenase (yhhW) (Escherichia coli (strain K12)).